The sequence spans 294 residues: Chelated iron transport system membrane protein YfeC (294 aa).

8 helical membrane passes run 17–37 (AIWV…YLML), 51–71 (VVPG…GAFF), 93–113 (AIIG…VSLN), 140–160 (IIIL…LAVF), 169–189 (IGLS…ACTV), 194–214 (TVGA…AYLL), 221–241 (LLII…YLSF), and 246–266 (ATGG…FFFA).

Belongs to the ABC-3 integral membrane protein family.

The protein localises to the cell inner membrane. Part of an ATP-driven transport system YfeABC for chelated iron. The polypeptide is Chelated iron transport system membrane protein YfeC (yfeC) (Yersinia pestis).